Here is a 403-residue protein sequence, read N- to C-terminus: Phosphoglycerate kinase (403 aa).

Residues 21-23 (DFN), arginine 37, 60-63 (HLGR), arginine 125, and arginine 158 each bind substrate. Residues lysine 209, glutamate 332, and 359–362 (GGDS) contribute to the ATP site.

This sequence belongs to the phosphoglycerate kinase family. As to quaternary structure, monomer.

The protein localises to the cytoplasm. It catalyses the reaction (2R)-3-phosphoglycerate + ATP = (2R)-3-phospho-glyceroyl phosphate + ADP. Its pathway is carbohydrate degradation; glycolysis; pyruvate from D-glyceraldehyde 3-phosphate: step 2/5. The polypeptide is Phosphoglycerate kinase (Koribacter versatilis (strain Ellin345)).